Reading from the N-terminus, the 840-residue chain is Cytosolic carboxypeptidase 2 (840 aa).

The region spanning 358 to 628 is the Peptidase M14 domain; that stretch reads YPYTYTDLQC…HVCDTLLDFC (271 aa). The Zn(2+) site is built by His424, Glu427, and His520. Glu592 serves as the catalytic Proton donor/acceptor. Residues 706 to 719 are compositionally biased toward basic residues; sequence MFKKKKKKSLQTRK. Disordered stretches follow at residues 706 to 726 and 758 to 789; these read MFKKKKKKSLQTRKQRNEQYQ and ESSSFLPMRNENPRLNETNLNRRDKDTSLDPS.

Belongs to the peptidase M14 family. In terms of assembly, interacts with RARRES1, KIF11 and MAPRE1. The cofactor is Zn(2+).

The protein localises to the cytoplasm. The protein resides in the cytosol. It localises to the cytoskeleton. It is found in the microtubule organizing center. Its subcellular location is the centrosome. The protein localises to the centriole. The protein resides in the cilium basal body. It carries out the reaction (L-glutamyl)(n+1)-gamma-L-glutamyl-L-glutamyl-[protein] + H2O = (L-glutamyl)(n)-gamma-L-glutamyl-L-glutamyl-[protein] + L-glutamate. Its activity is regulated as follows. Inhibited by RARRES1. In terms of biological role, metallocarboxypeptidase that mediates deglutamylation of tubulin and non-tubulin target proteins. Catalyzes the removal of polyglutamate side chains present on the gamma-carboxyl group of glutamate residues within the C-terminal tail of tubulin protein. Specifically cleaves tubulin long-side-chains, while it is not able to remove the branching point glutamate. Also catalyzes the removal of polyglutamate residues from the carboxy-terminus of non-tubulin proteins such as MYLK. This is Cytosolic carboxypeptidase 2 (AGBL2) from Macaca fascicularis (Crab-eating macaque).